The sequence spans 222 residues: Cytochrome b6 (222 aa).

A helical membrane pass occupies residues 39-59 (IFYCLGGITLTCFLIQFATGF). Cys-42 is a binding site for heme c. The heme b site is built by His-93 and His-107. The next 3 membrane-spanning stretches (helical) occupy residues 97–117 (ASMMVLMMILHVFRVYLTGGF), 123–143 (LTWVTGVVLAVITVSFGVTGY), and 193–213 (LHTFVLPWLIAVFMLLHFLMI). Residues His-194 and His-209 each coordinate heme b.

This sequence belongs to the cytochrome b family. PetB subfamily. As to quaternary structure, the 4 large subunits of the cytochrome b6-f complex are cytochrome b6, subunit IV (17 kDa polypeptide, PetD), cytochrome f and the Rieske protein, while the 4 small subunits are PetG, PetL, PetM and PetN. The complex functions as a dimer. It depends on heme b as a cofactor. The cofactor is heme c.

The protein resides in the cellular thylakoid membrane. Component of the cytochrome b6-f complex, which mediates electron transfer between photosystem II (PSII) and photosystem I (PSI), cyclic electron flow around PSI, and state transitions. This chain is Cytochrome b6, found in Cyanothece sp. (strain PCC 7425 / ATCC 29141).